Reading from the N-terminus, the 184-residue chain is MINDLKKDSEQRMQKTLESLEQGFAKVRTGRAHPSILNGVMVPYYGSDVPLNQVANVGIEDSRTLVVQPFERTMVSAIDKAIRESDLGLNPITADSIRVPLPALTEETRRDMQKVARSEAENAKVAIRNIRRDVLGDLKSLLKDKEISEDDERRAGDDIQKITDKYVAEVDKRLAAKEAELMKV.

This sequence belongs to the RRF family.

It localises to the cytoplasm. In terms of biological role, responsible for the release of ribosomes from messenger RNA at the termination of protein biosynthesis. May increase the efficiency of translation by recycling ribosomes from one round of translation to another. The polypeptide is Ribosome-recycling factor (Acinetobacter baylyi (strain ATCC 33305 / BD413 / ADP1)).